Reading from the N-terminus, the 737-residue chain is Fibronectin type III domain-containing protein 7 (737 aa).

The signal sequence occupies residues 1–25; it reads MAGRPEKCFSLIRFTLLCLKMVISS. 8 Fibronectin type-III domains span residues 28–115, 116–203, 204–288, 289–373, 374–459, 460–544, 545–633, and 631–715; these read APEI…TVLA, APVL…SPRA, PANI…TVAC, APGR…TAPC, CPND…TAPC, SPEI…TVPC, CPAG…CPLG, and PLGV…YSVT. N-linked (GlcNAc...) asparagine glycosylation is present at Asn-230. Asn-433 is a glycosylation site (N-linked (GlcNAc...) asparagine).

The protein localises to the secreted. The protein is Fibronectin type III domain-containing protein 7 (Fndc7) of Mus musculus (Mouse).